We begin with the raw amino-acid sequence, 95 residues long: Small ribosomal subunit protein uS19 (95 aa).

This sequence belongs to the universal ribosomal protein uS19 family.

Its function is as follows. Protein S19 forms a complex with S13 that binds strongly to the 16S ribosomal RNA. This is Small ribosomal subunit protein uS19 from Thermodesulfovibrio yellowstonii (strain ATCC 51303 / DSM 11347 / YP87).